Consider the following 196-residue polypeptide: Cilia- and flagella-associated protein 107 (196 aa).

Mn stretches follow at residues 46-61 (TPQT…FPGH) and 96-108 (ISTY…RHNY). Residues 168–196 (YPRPPAGAMSRREHAIPVPPPRLQPVPHF) form a disordered region. Residues 184-196 (PVPPPRLQPVPHF) are compositionally biased toward pro residues.

Microtubule inner protein component of sperm flagellar doublet microtubules. Expressed in trachea multiciliated cells.

The protein localises to the cytoplasm. It localises to the cytoskeleton. Its subcellular location is the cilium axoneme. It is found in the flagellum axoneme. Its function is as follows. Microtubule inner protein (MIP) part of the dynein-decorated doublet microtubules (DMTs) in cilia axoneme, which is required for motile cilia beating. This chain is Cilia- and flagella-associated protein 107, found in Bos taurus (Bovine).